The sequence spans 367 residues: Dihydroxyacetone phosphate transaminase Cj1437c (367 aa).

Lysine 219 is subject to N6-(pyridoxal phosphate)lysine.

This sequence belongs to the class-II pyridoxal-phosphate-dependent aminotransferase family. Pyridoxal 5'-phosphate is required as a cofactor.

It carries out the reaction dihydroxyacetone phosphate + L-glutamate = (S)-serinol phosphate + 2-oxoglutarate. Its pathway is capsule biogenesis; capsule polysaccharide biosynthesis. Pyridoxal phosphate (PLP)-dependent transaminase involved in the biosynthesis of amidated D-glucuronic acid structures found on the capsular polysaccharide (CPS) of C.jejuni. Catalyzes the transamination of dihydroxyacetone phosphate (DHAP) to (S)-serinol phosphate in the presence of L-glutamate. Less active with L-aspartate. No activity with dihydroxyacetone or L-alanine. This is Dihydroxyacetone phosphate transaminase Cj1437c from Campylobacter jejuni subsp. jejuni serotype O:2 (strain ATCC 700819 / NCTC 11168).